The primary structure comprises 416 residues: WD repeat-containing protein JIP5 (416 aa).

WD repeat units follow at residues 9–48 (PLSSDLFSQAIHPTEPLVSIGLSSGHVQTFHLPAPSENGK), 62–101 (RHKGSCRCVGFGIDGETLYSAGTDGWVKAARTETGRVEWK), and 112–151 (GFQVDSPCLIHALSPQTLLLATDSGALHLFDLRDRSTEVS). Positions 149 to 183 (EVSARPQQTHHPHDDYVSSLTPLPPSETSTSGYSK) are disordered. A compositionally biased stretch (low complexity) spans 166 to 179 (SSLTPLPPSETSTS). 3 WD repeats span residues 214–255 (ISSS…DQDE), 264–308 (DGGE…ISEL), and 309–348 (SHDDLEGVVGLGFDVQGRMISGGGTVVKVWHEAISDEEGN). Acidic residues-rich tracts occupy residues 343 to 359 (SDEEGNDDESDEEDIEN) and 374 to 383 (SDEEEDSDDD). The disordered stretch occupies residues 343–416 (SDEEGNDDES…VHVMAFKGLD (74 aa)). Positions 389–400 (KGKRKKRKRGKG) are enriched in basic residues.

Belongs to the WD repeat WDR55 family.

The protein resides in the nucleus. It localises to the nucleolus. The chain is WD repeat-containing protein JIP5 (JIP5) from Coccidioides immitis (strain RS) (Valley fever fungus).